Here is a 202-residue protein sequence, read N- to C-terminus: Large ribosomal subunit protein uL13 (202 aa).

The protein belongs to the universal ribosomal protein uL13 family.

This is Large ribosomal subunit protein uL13 from Caenorhabditis elegans.